The sequence spans 54 residues: Ovomucoid (54 aa).

A Kazal-like domain is found at 4 to 54 (VDCSDYPKPVCTLDYMPLCGSDNKTYSNKCNFCNAVVDSNGTITLSHFGRC). Cystine bridges form between Cys6-Cys36, Cys14-Cys33, and Cys22-Cys54. Residue Asn43 is glycosylated (N-linked (GlcNAc...) asparagine).

It is found in the secreted. In Coloeus monedula (Eurasian jackdaw), this protein is Ovomucoid.